We begin with the raw amino-acid sequence, 493 residues long: Leucine-rich repeat-containing protein 14 (493 aa).

Residues 111-146 (KHTLRVLDMTGLLDDGVEQDPGTMSMWDCTAAVART) form an LRR 1; degenerate repeat. The LRR 2; degenerate repeat unit spans residues 194-218 (RLCCRDLRAEDLPMRNTVALLQLLD). One copy of the LRR 3; degenerate repeat lies at 219 to 246 (AGCLRRIDLRFNNLGLRGLSVIIPHVAR). An LRR 4; degenerate repeat occupies 247-282 (FQHLASLRLHYVHGDSRQPSVDGEDNFRYFLAQMGR). 5 LRR repeats span residues 283–307 (FICL…LSTL), 308–339 (QRPL…AHLK), 340–360 (KLDL…QGLL), 364–391 (AATL…TLTR), and 392–416 (CASL…LLRD).

Belongs to the PRAME family. LRRC14 subfamily. In terms of assembly, interacts with IKBKB; disrupts IKBKB-IKBKG interaction preventing I-kappa-B-kinase (IKK) core complex formation and leading to a decrease of IKBKB phosphorylation and NF-kappaB activation. Interacts with CHUK.

Its subcellular location is the cytoplasm. Its function is as follows. Negatively regulates Toll-like receptor-mediated NF-kappa-B signaling by disrupting IKK core complex formation through interaction with IKBKB. This is Leucine-rich repeat-containing protein 14 from Rattus norvegicus (Rat).